The sequence spans 539 residues: MAAKEVKFASDARDRMLRGVDTLANAVKVTLGPKGRNVVIEKSFGAPRITKDGVTVAKEIELKDKFENMGAQMLREVASKQNDKAGDGTTTATVLAQAIVREGAKAVAAGMNPIDLKRGIDLAVGTVVKDLESHAKKVSANSEIAQVATISANGDETVGRFLAEAMDKVGNEGVITVEEAKSLETELETVEGMQFDRGYLSPYFVTNTEKLKVELEDPYILIHEKKLSNLQALIPLLEQVVQSGKPLLIIAEDVEGEALATLVVNKLRGGLKVAAVKAPGFGDRRKAMLEDVAILTAGNVVSEELGTKLENVTIGMLGRAKKVIIDKDNTTIVDGAGNKADIDARVSQIRAQIETTTSDYDREKLQERVAKLAGGVAVIRVGGATEVEVKERKDRVDDALHATRAAVEEGILPGGGIALLRALKSLDGLKAANDDQQSGIDIVRRALRAPARQIAENAGEDGAYIVGKLLEGDDYNHGFNAATGEYEDLVKSGVIDPAKVVRTALQDAASVASLLITTEALVAELPKEDTPAPMPAMDF.

Residues 30 to 33 (TLGP), K51, 87 to 91 (DGTTT), G415, 480 to 482 (NAA), and D496 contribute to the ATP site.

This sequence belongs to the chaperonin (HSP60) family. As to quaternary structure, forms a cylinder of 14 subunits composed of two heptameric rings stacked back-to-back. Interacts with the co-chaperonin GroES.

It localises to the cytoplasm. The enzyme catalyses ATP + H2O + a folded polypeptide = ADP + phosphate + an unfolded polypeptide.. Together with its co-chaperonin GroES, plays an essential role in assisting protein folding. The GroEL-GroES system forms a nano-cage that allows encapsulation of the non-native substrate proteins and provides a physical environment optimized to promote and accelerate protein folding. The polypeptide is Chaperonin GroEL 1 (Erythrobacter litoralis (strain HTCC2594)).